A 343-amino-acid polypeptide reads, in one-letter code: Probable magnesium transporter NIPA4 (343 aa).

The Extracellular segment spans residues 1 to 18; the sequence is MAESSGSWRDSYKGMSSD. The helical transmembrane segment at 19-39 threads the bilayer; the sequence is NIKGLVLALSSSLFIGASFIV. Residues 40 to 66 lie on the Cytoplasmic side of the membrane; the sequence is KKKGLKKAASTGTRAGVGGYSYLYEPL. A helical membrane pass occupies residues 67-87; the sequence is WWIGMTTMLLGEIANFAAYAF. Over 88-90 the chain is Extracellular; sequence APA. Residues 91-111 traverse the membrane as a helical segment; sequence ILVTPLGAVSIIISAVLAHII. Residues 112–115 lie on the Cytoplasmic side of the membrane; the sequence is LREK. A helical membrane pass occupies residues 116-136; that stretch reads LHIFGILGCALCVVGSTTIVL. Topologically, residues 137–157 are extracellular; it reads HAPQEREIDSVIEVWNLATEP. The chain crosses the membrane as a helical span at residues 158–178; it reads AFMFYASLVIGAAVFLIIRFV. The Cytoplasmic portion of the chain corresponds to 179–189; sequence PQYGQTNVMVY. Residues 190 to 210 traverse the membrane as a helical segment; that stretch reads IGICSLVGSLSVMSVKALGIA. Residues 211 to 220 lie on the Extracellular side of the membrane; the sequence is LKLTFSGTNQ. A helical transmembrane segment spans residues 221 to 241; sequence LFYPQTWIFTLVVLTCVVTQL. At 242 to 254 the chain is on the cytoplasmic side; that stretch reads NYLNKALDTFNTA. A helical membrane pass occupies residues 255-275; that stretch reads IVSPIYYVMFTSLTILASVIM. The Extracellular segment spans residues 276–283; sequence FKDWDRQN. Residues 284-304 form a helical membrane-spanning segment; sequence GTQIVTEICGFVTILSGTFLL. Over 305–343 the chain is Cytoplasmic; the sequence is HRTKDMVEGSSVILPLRISKHINEEEGIPLRRQESLRSP.

Belongs to the NIPA (TC 2.A.7) family. Homodimer.

It is found in the cell membrane. The protein resides in the early endosome. Its function is as follows. Acts as a Mg(2+) transporter. Can also transport other divalent cations such as Fe(2+), Sr(2+), Ba(2+), Mn(2+) and Co(2+) but to a much less extent than Mg(2+). The chain is Probable magnesium transporter NIPA4 from Arabidopsis thaliana (Mouse-ear cress).